We begin with the raw amino-acid sequence, 443 residues long: L-ornithine N(5)-monooxygenase (443 aa).

FAD is bound by residues 45 to 53 and Q64; that span reads DKQGDYRWH. K69 contributes to the substrate binding site. Residue V130 coordinates FAD. NADP(+) contacts are provided by residues 215 to 218 and R240; that span reads GGQS. Substrate contacts are provided by residues 254-257 and N284; that span reads NEVF. 284-286 is an NADP(+) binding site; sequence NYS. 407-409 lines the FAD pocket; sequence TLL. S410 provides a ligand contact to substrate.

Belongs to the lysine N(6)-hydroxylase/L-ornithine N(5)-oxygenase family. In terms of assembly, homotetramer. It depends on FAD as a cofactor.

It is found in the cell inner membrane. It carries out the reaction L-ornithine + NADPH + O2 = N(5)-hydroxy-L-ornithine + NADP(+) + H2O. The protein operates within siderophore biosynthesis; pyoverdin biosynthesis. In terms of biological role, catalyzes the conversion of L-ornithine to N(5)-hydroxyornithine, the first step in the biosynthesis of all hydroxamate-containing siderophores, such as pyoverdin. Pyoverdin is a hydroxamate siderophore composed of a 6,7-dihydroxyquinoline-containing fluorescent chromophore joined to the N-terminus of a partly cyclic octapeptide (D-Ser-L-Arg-D-Ser-L-N(5)-OH-Orn-L-Lys-L-N(5)-OH-Orn-L-Thr-L-Thr in strain PAO1). Specific for NADPH, which plays a role in stabilization of the C4a-hydroperoxyflavin intermediate. The protein is L-ornithine N(5)-monooxygenase of Pseudomonas aeruginosa (strain ATCC 15692 / DSM 22644 / CIP 104116 / JCM 14847 / LMG 12228 / 1C / PRS 101 / PAO1).